The sequence spans 424 residues: Probable methyltransferase EP424R (424 aa).

Positions 103-315 (QIVTNAWLKM…TYIVGKNRLR (213 aa)) constitute an Adrift-type SAM-dependent 2'-O-MTase domain. Residues Gly-135 and Asp-228 each contribute to the S-adenosyl-L-methionine site. Lys-268 acts as the Proton acceptor in catalysis.

The protein resides in the virion. The polypeptide is Probable methyltransferase EP424R (Ornithodoros (relapsing fever ticks)).